Here is a 176-residue protein sequence, read N- to C-terminus: Oleosin Ara h 14.0103 (176 aa).

Alanine 2 carries the post-translational modification N-acetylalanine; alternate. 3 helical membrane passes run 50–70 (IIAV…SGLS), 75–95 (IIGL…IVPA), and 96–116 (VVTI…GLTG). Residues 156-176 (KTKDAGQEIQTKAQDVKRSSS) form a disordered region.

The protein belongs to the oleosin family. Expressed in seeds (at protein level).

The protein localises to the lipid droplet. Its subcellular location is the membrane. Functionally, may have a structural role to stabilize the lipid body during desiccation of the seed by preventing coalescence of the oil. Probably interacts with both lipid and phospholipid moieties of lipid bodies. May also provide recognition signals for specific lipase anchorage in lipolysis during seedling growth. This chain is Oleosin Ara h 14.0103, found in Arachis hypogaea (Peanut).